Consider the following 639-residue polypeptide: Probable methyltransferase PMT18 (639 aa).

Residues 1-19 (MAKENSSHSLAEAKRKRLT) are Cytoplasmic-facing. Residues 20-42 (WILCVSGLCILSYVLGSWQTNTV) form a helical; Signal-anchor for type II membrane protein membrane-spanning segment. Residues 41-86 (TVPTSSSEAYSRMGCDETSTTTRAQTTQTQTNPSSDDTSSSLSSSE) form a disordered region. Over 43-639 (PTSSSEAYSR…VKSYWTGPSS (597 aa)) the chain is Lumenal. Positions 58–85 (TSTTTRAQTTQTQTNPSSDDTSSSLSSS) are enriched in low complexity. N-linked (GlcNAc...) asparagine glycans are attached at residues Asn104 and Asn427.

The protein belongs to the methyltransferase superfamily.

The protein localises to the endoplasmic reticulum membrane. The chain is Probable methyltransferase PMT18 from Arabidopsis thaliana (Mouse-ear cress).